The following is a 358-amino-acid chain: 5-amino-6-(D-ribitylamino)uracil--L-tyrosine 4-hydroxyphenyl transferase 2 (358 aa).

The 248-residue stretch at 45-292 (VTFVKNTNIE…ESIKNIQAPR (248 aa)) folds into the Radical SAM core domain. The [4Fe-4S] cluster site is built by Cys59, Cys63, and Cys66.

The protein belongs to the radical SAM superfamily. CofH family. As to quaternary structure, consists of two subunits, CofG and CofH. Requires [4Fe-4S] cluster as cofactor.

It carries out the reaction 5-amino-6-(D-ribitylamino)uracil + L-tyrosine + S-adenosyl-L-methionine = 5-amino-5-(4-hydroxybenzyl)-6-(D-ribitylimino)-5,6-dihydrouracil + 2-iminoacetate + 5'-deoxyadenosine + L-methionine + H(+). It participates in cofactor biosynthesis; coenzyme F0 biosynthesis. Its function is as follows. Catalyzes the radical-mediated synthesis of 5-amino-5-(4-hydroxybenzyl)-6-(D-ribitylimino)-5,6-dihydrouracil from 5-amino-6-(D-ribitylamino)uracil and L-tyrosine. The protein is 5-amino-6-(D-ribitylamino)uracil--L-tyrosine 4-hydroxyphenyl transferase 2 of Methanococcus maripaludis (strain DSM 14266 / JCM 13030 / NBRC 101832 / S2 / LL).